We begin with the raw amino-acid sequence, 123 residues long: Zinc metalloproteinase-disintegrin-like jerdohagin (123 aa).

The Peptidase M12B domain maps to 6-52 (RYLYIRHDREACTCHANSCIMSAYFSNSHVQYENYINDCKPQCILNE). Histidine 12 provides a ligand contact to Zn(2+). Residues cysteine 19 and cysteine 24 are joined by a disulfide bond. 2 residues coordinate Ca(2+): cysteine 48 and asparagine 51. Residues 53 to 80 (LHSWVECESGECCEQCRSECDIAESCTN) form the Disintegrin domain. Cystine bridges form between cysteine 59/cysteine 65, cysteine 64/cysteine 78, cysteine 72/cysteine 90, and cysteine 106/cysteine 116. Positions 71–73 (ECD) match the D/ECD-tripeptide motif.

It belongs to the venom metalloproteinase (M12B) family. P-III subfamily. P-IIIa sub-subfamily. In terms of assembly, monomer. It depends on Zn(2+) as a cofactor. The N-terminus is blocked. Expressed by the venom gland.

The protein resides in the secreted. With respect to regulation, its proteolytic and hemorrhagic activities are inhibited by EDTA, but not by PMSF. Functionally, snake venom metalloproteinase that has high hemorrhagic activity and degrades the alpha-chain of fibrinogen (FGA), leaving the beta- and the gamma-chain intact. It may also inhibit platelet aggregation. Cleaves insulin B chain at '25-Phe-|-Val-26', '26-Val-|-Asn-27', '29-His-|-Leu-30', '30-Leu-|-Cys-31', '33-Ser-|-His-34', '35-Leu-|-Val-36', '40-Tyr-|-Leu-41', '41-Leu-|-Val-42', '42-Val-|-Cys-43', '43-Cys-|-Gly-44', '44-Gly-|-Glu-45', '46-Arg-|-Gly-47', '47-Gly-|-Phe-48', '49-Phe-|-Tyr-50' and '52-Pro-|-Lys-53' bonds. Also cleaves human prothrombin (72 kDa) and activation fragment F1 (27 kDa) of activated human prothrombin, to generate two new proteins of 68 and 23 kDa. This is Zinc metalloproteinase-disintegrin-like jerdohagin from Protobothrops jerdonii (Jerdon's pitviper).